A 347-amino-acid polypeptide reads, in one-letter code: NADH-ubiquinone oxidoreductase chain 2 (347 aa).

9 helical membrane passes run 5-22, 26-45, 60-80, 150-170, 178-198, 200-220, 242-262, 274-294, and 324-344; these read ILTI…MVLI, WLTV…PILM, FLTQ…NLLL, NPNL…WGGL, ILAY…TYNP, LMML…MLFM, SLIL…GFIP, NMII…YFYM, and TLLP…PMML.

The protein belongs to the complex I subunit 2 family. In terms of assembly, core subunit of respiratory chain NADH dehydrogenase (Complex I) which is composed of 45 different subunits. Interacts with TMEM242.

Its subcellular location is the mitochondrion inner membrane. It catalyses the reaction a ubiquinone + NADH + 5 H(+)(in) = a ubiquinol + NAD(+) + 4 H(+)(out). In terms of biological role, core subunit of the mitochondrial membrane respiratory chain NADH dehydrogenase (Complex I) which catalyzes electron transfer from NADH through the respiratory chain, using ubiquinone as an electron acceptor. Essential for the catalytic activity and assembly of complex I. The polypeptide is NADH-ubiquinone oxidoreductase chain 2 (Martes flavigula (Yellow-throated marten)).